A 458-amino-acid polypeptide reads, in one-letter code: Phosphomethylpyrimidine synthase (458 aa).

Substrate-binding positions include Asn80, Met109, Tyr139, His175, 195 to 197, 236 to 239, and Glu275; these read SRG and DSLR. His279 provides a ligand contact to Zn(2+). Tyr302 is a binding site for substrate. His343 contributes to the Zn(2+) binding site. 3 residues coordinate [4Fe-4S] cluster: Cys423, Cys426, and Cys431.

The protein belongs to the ThiC family. [4Fe-4S] cluster is required as a cofactor.

The catalysed reaction is 5-amino-1-(5-phospho-beta-D-ribosyl)imidazole + S-adenosyl-L-methionine = 4-amino-2-methyl-5-(phosphooxymethyl)pyrimidine + CO + 5'-deoxyadenosine + formate + L-methionine + 3 H(+). It participates in cofactor biosynthesis; thiamine diphosphate biosynthesis. Functionally, catalyzes the synthesis of the hydroxymethylpyrimidine phosphate (HMP-P) moiety of thiamine from aminoimidazole ribotide (AIR) in a radical S-adenosyl-L-methionine (SAM)-dependent reaction. The protein is Phosphomethylpyrimidine synthase of Cyanothece sp. (strain PCC 7425 / ATCC 29141).